The following is a 407-amino-acid chain: Tyrosine--tRNA ligase (407 aa).

A 'HIGH' region motif is present at residues 47 to 56; it reads PTAPDLHLGA. The short motif at 231–235 is the 'KMSKS' region element; that stretch reads KMSKS. Lys-234 is an ATP binding site. Residues 342 to 403 form the S4 RNA-binding domain; that stretch reads PRLSQLLVQV…GKRHFARVAL (62 aa).

Belongs to the class-I aminoacyl-tRNA synthetase family. TyrS type 2 subfamily. Homodimer.

Its subcellular location is the cytoplasm. The enzyme catalyses tRNA(Tyr) + L-tyrosine + ATP = L-tyrosyl-tRNA(Tyr) + AMP + diphosphate + H(+). Its function is as follows. Catalyzes the attachment of tyrosine to tRNA(Tyr) in a two-step reaction: tyrosine is first activated by ATP to form Tyr-AMP and then transferred to the acceptor end of tRNA(Tyr). In Acidithiobacillus ferrooxidans (Thiobacillus ferrooxidans), this protein is Tyrosine--tRNA ligase.